A 118-amino-acid chain; its full sequence is Protein TusC (118 aa).

Belongs to the DsrF/TusC family. Heterohexamer, formed by a dimer of trimers. The hexameric TusBCD complex contains 2 copies each of TusB, TusC and TusD. The TusBCD complex interacts with TusE.

The protein localises to the cytoplasm. In terms of biological role, part of a sulfur-relay system required for 2-thiolation of 5-methylaminomethyl-2-thiouridine (mnm(5)s(2)U) at tRNA wobble positions. The polypeptide is Protein TusC (Salmonella agona (strain SL483)).